A 92-amino-acid chain; its full sequence is MRNGPRVQPNGERAIVQIVVRDNNVEQALRALKKKMQREGTFREMKRRNHYEKPSEKKARQKAEAIRRARKLARKRAQREGLIAKRGGTTRR.

The tract at residues 37–92 (QREGTFREMKRRNHYEKPSEKKARQKAEAIRRARKLARKRAQREGLIAKRGGTTRR) is disordered. Residues 51-67 (YEKPSEKKARQKAEAIR) show a composition bias toward basic and acidic residues. Basic residues predominate over residues 68 to 77 (RARKLARKRA).

Belongs to the bacterial ribosomal protein bS21 family.

The polypeptide is Small ribosomal subunit protein bS21 (Maricaulis maris (strain MCS10) (Caulobacter maris)).